We begin with the raw amino-acid sequence, 115 residues long: U3-lycotoxin-Ls1o (115 aa).

A signal peptide spans methionine 1–alanine 20. Positions glutamate 21–arginine 44 are excised as a propeptide. 4 disulfides stabilise this stretch: cysteine 48–cysteine 63, cysteine 55–cysteine 72, cysteine 62–cysteine 87, and cysteine 74–cysteine 85.

Belongs to the neurotoxin 19 (CSTX) family. 01 subfamily. Expressed by the venom gland.

The protein resides in the secreted. The protein is U3-lycotoxin-Ls1o of Lycosa singoriensis (Wolf spider).